A 238-amino-acid polypeptide reads, in one-letter code: Probable transcriptional regulatory protein TC_0742 (238 aa).

A disordered region spans residues 1-21 (MAGHSKWANTKHRKERADHKK). Residues 9-21 (NTKHRKERADHKK) are compositionally biased toward basic residues.

It belongs to the TACO1 family.

It localises to the cytoplasm. The sequence is that of Probable transcriptional regulatory protein TC_0742 from Chlamydia muridarum (strain MoPn / Nigg).